A 430-amino-acid chain; its full sequence is Rosmarinate synthase (430 aa).

Histidine 152 acts as the Proton acceptor in catalysis. The segment at 178 to 210 is disordered; it reads TPLPHFDRSSLSARNPPQPQFSHAEYQPPPTLE. The active-site Proton acceptor is aspartate 377.

Belongs to the plant acyltransferase family.

It catalyses the reaction (2R)-3-(3,4-dihydroxyphenyl)lactate + (E)-caffeoyl-CoA = (R)-rosmarinate + CoA. Involved in the biosynthesis of rosmarinic acid, a compound with antiviral, antimicrobial and anti-inflammatory activities. Can use 4-coumaroyl- and caffeoyl-CoA as hydroxycinnamoyl donors and 4-Hydroxyphenyllactate and 3.4-Dihydroxyphenyllactate, but not shikimate or quinate, as hydroxycinnamoyl acceptors. Can also putatively catalyze amide formation with D-amino acids as acceptors. This Plectranthus scutellarioides (Coleus) protein is Rosmarinate synthase (RAS).